Reading from the N-terminus, the 222-residue chain is Histidine biosynthesis bifunctional protein HisIE (222 aa).

Positions 1–128 are phosphoribosyl-AMP cyclohydrolase; that stretch reads MQPLSPAFID…SLTLPPPMDA (128 aa). Residues 129 to 222 are phosphoribosyl-ATP pyrophosphohydrolase; sequence CSELFRVIDQ…ANRRGAPRRN (94 aa).

This sequence in the N-terminal section; belongs to the PRA-CH family. In the C-terminal section; belongs to the PRA-PH family.

The protein resides in the cytoplasm. The catalysed reaction is 1-(5-phospho-beta-D-ribosyl)-ATP + H2O = 1-(5-phospho-beta-D-ribosyl)-5'-AMP + diphosphate + H(+). The enzyme catalyses 1-(5-phospho-beta-D-ribosyl)-5'-AMP + H2O = 1-(5-phospho-beta-D-ribosyl)-5-[(5-phospho-beta-D-ribosylamino)methylideneamino]imidazole-4-carboxamide. The protein operates within amino-acid biosynthesis; L-histidine biosynthesis; L-histidine from 5-phospho-alpha-D-ribose 1-diphosphate: step 2/9. Its pathway is amino-acid biosynthesis; L-histidine biosynthesis; L-histidine from 5-phospho-alpha-D-ribose 1-diphosphate: step 3/9. The protein is Histidine biosynthesis bifunctional protein HisIE of Prochlorococcus marinus (strain MIT 9313).